We begin with the raw amino-acid sequence, 492 residues long: uncharacterized protein (492 aa).

266–273 (GIQGTGKS) lines the ATP pocket.

It belongs to the AAA ATPase family. Highly divergent.

The protein resides in the plastid. It localises to the chloroplast. This is an uncharacterized protein from Pyropia yezoensis (Susabi-nori).